The primary structure comprises 785 residues: Rho GTPase-activating protein 10 (785 aa).

The region spanning 7–262 (EFSDCYLDSP…IRQNPKDHKR (256 aa)) is the BAR domain. The PH domain maps to 265–372 (QFTAEGYLYV…WLEVLGGKEA (108 aa)). The Rho-GAP domain maps to 389–574 (AQLDKMGFTI…ILIENHEKIF (186 aa)). The disordered stretch occupies residues 576 to 708 (TPPDATLPEP…PAVTPPSPKL (133 aa)). A compositionally biased stretch (pro residues) spans 584–595 (EPGPLSAPPNAP). Positions 598-608 (QSKRQGQRTKR) are enriched in basic residues. Over residues 622–632 (GDRPSLPKEDT) the composition is skewed to basic and acidic residues. The span at 633–650 (PPSSLDSLSSPSPTTATA) shows a compositional bias: low complexity. Residues 675–697 (APSQARSSAVQWLNPQSPTTPSC) show a composition bias toward polar residues. Positions 727–785 (IISRKARAVYPCEAEHSSELSFEIGAIFEDVQTSREPGWLEGTLNGKRGLIPQNYVKLL) constitute an SH3 domain.

Interacts with PKN3. Interacts with caspase-activated PAK2 proteolytic fragment PAK-2p34; the interaction does not affect ARHGAP10 GTPase activation activity towards RHOA and CDC42. Interacts via its SH3 domain with PTK2/FAK1. Interacts with PTK2B/PYK2; the interaction negatively regulates ARHGAP10 GTPase-activating activity. Interacts with MICAL1 and WDR44; complex formation might transit from GRAF2/ARHGAP10-MICAL1 to GRAF2/ARHGAP10-WDR44 complexes.

Its subcellular location is the cytoplasm. The protein localises to the perinuclear region. It is found in the cell membrane. The protein resides in the endosome membrane. In terms of biological role, GTPase-activating protein that catalyzes the conversion of active GTP-bound Rho GTPases to their inactive GDP-bound form, thus suppressing various Rho GTPase-mediated cellular processes. Also converts Cdc42 to an inactive GDP-bound state. Essential for PTKB2 regulation of cytoskeletal organization via Rho family GTPases. Inhibits PAK2 proteolytic fragment PAK-2p34 kinase activity and changes its localization from the nucleus to the perinuclear region. Stabilizes PAK-2p34 thereby increasing stimulation of cell death. Associates with MICAL1 on the endosomal membrane to promote Rab8-Rab10-dependent tubule extension. After dissociation with MICAL1, recruits WDR44 which connects the endoplasmic reticulum (ER) with the endosomal tubule, thereby participating in the export of a subset of neosynthesized proteins. In Bos taurus (Bovine), this protein is Rho GTPase-activating protein 10 (ARHGAP10).